A 419-amino-acid chain; its full sequence is UDP-N-acetylglucosamine 1-carboxyvinyltransferase 2 (419 aa).

Phosphoenolpyruvate is bound at residue 22 to 23 (KN). Arg-92 is a UDP-N-acetyl-alpha-D-glucosamine binding site. The active-site Proton donor is the Asp-116. UDP-N-acetyl-alpha-D-glucosamine contacts are provided by residues 121–125 (RPIDQ), Asp-306, and Leu-328.

Belongs to the EPSP synthase family. MurA subfamily.

Its subcellular location is the cytoplasm. It carries out the reaction phosphoenolpyruvate + UDP-N-acetyl-alpha-D-glucosamine = UDP-N-acetyl-3-O-(1-carboxyvinyl)-alpha-D-glucosamine + phosphate. It participates in cell wall biogenesis; peptidoglycan biosynthesis. Its function is as follows. Cell wall formation. Adds enolpyruvyl to UDP-N-acetylglucosamine. In Latilactobacillus sakei subsp. sakei (strain 23K) (Lactobacillus sakei subsp. sakei), this protein is UDP-N-acetylglucosamine 1-carboxyvinyltransferase 2.